A 579-amino-acid chain; its full sequence is uncharacterized protein (579 aa).

The GGDEF domain maps to 449-577 (QKGVFILVDI…GKNRLMIHDS (129 aa)).

This is an uncharacterized protein from Bacillus subtilis (strain 168).